A 148-amino-acid chain; its full sequence is MITIEDLKPTPGSNKKYKRLGRGQGSGKGKTAGKGHKGQKSRGTGKVRAWMEGGQTPLHRRLPKFGFKNFTKKFYAVVNLETLEEKFDSNAVVTPEVLIEKGIIDKIYDGVKILARGEITKPLTVKAHKFSEKAKEKIEKVGGKIEVI.

The disordered stretch occupies residues 1 to 46 (MITIEDLKPTPGSNKKYKRLGRGQGSGKGKTAGKGHKGQKSRGTGK). Over residues 31–45 (TAGKGHKGQKSRGTG) the composition is skewed to basic residues.

It belongs to the universal ribosomal protein uL15 family. As to quaternary structure, part of the 50S ribosomal subunit.

Its function is as follows. Binds to the 23S rRNA. This is Large ribosomal subunit protein uL15 from Fervidobacterium nodosum (strain ATCC 35602 / DSM 5306 / Rt17-B1).